The chain runs to 205 residues: Protein N-terminal glutamine amidohydrolase (205 aa).

Residues C20, H74, and D90 contribute to the active site.

This sequence belongs to the NTAQ1 family. In terms of assembly, monomer.

The catalysed reaction is N-terminal L-glutaminyl-[protein] + H2O = N-terminal L-glutamyl-[protein] + NH4(+). Mediates the side-chain deamidation of N-terminal glutamine residues to glutamate, an important step in N-end rule pathway of protein degradation. Conversion of the resulting N-terminal glutamine to glutamate renders the protein susceptible to arginylation, polyubiquitination and degradation as specified by the N-end rule. Does not act on substrates with internal or C-terminal glutamine and does not act on non-glutamine residues in any position. The sequence is that of Protein N-terminal glutamine amidohydrolase (tun) from Drosophila virilis (Fruit fly).